A 449-amino-acid chain; its full sequence is Asparagine--tRNA ligase (449 aa).

It belongs to the class-II aminoacyl-tRNA synthetase family. As to quaternary structure, homodimer.

The protein localises to the cytoplasm. It carries out the reaction tRNA(Asn) + L-asparagine + ATP = L-asparaginyl-tRNA(Asn) + AMP + diphosphate + H(+). The sequence is that of Asparagine--tRNA ligase from Deinococcus geothermalis (strain DSM 11300 / CIP 105573 / AG-3a).